The chain runs to 303 residues: Diacylglycerol kinase (303 aa).

The DAGKc domain maps to 1-132; sequence MKRARIIYNP…IDIGQVNGQY (132 aa). ATP is bound by residues 9–13, Thr-40, 66–72, and Thr-93; these read NPTSG and GDGTINE. The Mg(2+) site is built by Ser-213, Asp-216, and Met-218. The active-site Proton acceptor is Glu-273.

Belongs to the diacylglycerol/lipid kinase family. The cofactor is Mg(2+).

It catalyses the reaction a 1,2-diacyl-sn-glycerol + ATP = a 1,2-diacyl-sn-glycero-3-phosphate + ADP + H(+). The enzyme catalyses 1,2-di-(9Z-octadecenoyl)-sn-glycerol + ATP = 1,2-di-(9Z-octadecenoyl)-sn-glycero-3-phosphate + ADP + H(+). Its function is as follows. Catalyzes the phosphorylation of diacylglycerol (DAG) into phosphatidic acid. Is a key enzyme involved in the production of lipoteichoic acid by reintroducing DAG formed from the breakdown of membrane phospholipids into the phosphatidylglycerol biosynthetic pathway. Is more active toward long-chain DAG compared with short-chain DAG. Is not able to phosphorylate substrates other than DAG, such as monoacylglycerol, ceramide, undecaprenol, phosphatidylinositol, or sphingosine. This Bacillus subtilis (strain 168) protein is Diacylglycerol kinase (dagK).